We begin with the raw amino-acid sequence, 402 residues long: Baeyer-Villiger oxidase notM (402 aa).

Belongs to the questin oxidase family.

In terms of biological role, baeyer-Villiger oxidase; part of the gene cluster that mediates the biosynthesis of notoamide, a fungal indole alkaloid that belongs to a family of natural products containing a characteristic bicyclo[2.2.2]diazaoctane core. The first step of notoamide biosynthesis involves coupling of L-proline and L-tryptophan by the bimodular NRPS notE, to produce cyclo-L-tryptophan-L-proline called brevianamide F. The reverse prenyltransferase notF then acts as a deoxybrevianamide E synthase and converts brevianamide F to deoxybrevianamide E via reverse prenylation at C-2 of the indole ring leading to the bicyclo[2.2.2]diazaoctane core. Deoxybrevianamide E is further hydroxylated at C-6 of the indole ring, likely catalyzed by the cytochrome P450 monooxygenase notG, to yield 6-hydroxy-deoxybrevianamide E. 6-hydroxy-deoxybrevianamide E is a specific substrate of the prenyltransferase notC for normal prenylation at C-7 to produce 6-hydroxy-7-prenyl-deoxybrevianamide, also called notoamide S. As the proposed pivotal branching point in notoamide biosynthesis, notoamide S can be diverted to notoamide E through an oxidative pyran ring closure putatively catalyzed by either notH cytochrome P450 monooxygenase or the notD FAD-linked oxidoreductase. This step would be followed by an indole 2,3-epoxidation-initiated pinacol-like rearrangement catalyzed by the notB FAD-dependent monooxygenase leading to the formation of notoamide C and notoamide D. On the other hand notoamide S is converted to notoamide T by notH (or notD), a bifunctional oxidase that also functions as the intramolecular Diels-Alderase responsible for generation of (+)-notoamide T. To generate antipodal (-)-notoaminide T, notH' (or notD') in Aspergillus versicolor is expected to catalyze a Diels-Alder reaction leading to the opposite stereochemistry. The remaining oxidoreductase notD (or notH) likely catalyzes the oxidative pyran ring formation to yield (+)-stephacidin A. The FAD-dependent monooxygenase notI is highly similar to notB and is predicted to catalyze a similar conversion from (+)-stephacidin A to (-)-notoamide B via the 2,3-epoxidation of (+)-stephacidin A followed by a pinacol-type rearrangement. Finally, it remains unclear which enzyme could be responsible for the final hydroxylation steps leading to notoamide A and sclerotiamide. The function of notM in the notoamide biosynthesis has not been determined yet. The sequence is that of Baeyer-Villiger oxidase notM from Aspergillus sp. (strain MF297-2).